The primary structure comprises 50 residues: Basic phospholipase A2 Bmaj-9 (50 aa).

Residues tyrosine 27, glycine 29, and glycine 31 each contribute to the Ca(2+) site. An intrachain disulfide couples cysteine 28 to cysteine 45. The active site involves histidine 48. Ca(2+) is bound at residue aspartate 49.

This sequence belongs to the phospholipase A2 family. Group II subfamily. D49 sub-subfamily. Requires Ca(2+) as cofactor. As to expression, expressed by the venom gland.

The protein resides in the secreted. It catalyses the reaction a 1,2-diacyl-sn-glycero-3-phosphocholine + H2O = a 1-acyl-sn-glycero-3-phosphocholine + a fatty acid + H(+). Snake venom phospholipase A2 (PLA2) that causes irreversible neuromuscular blockade in chick biventer cervicis muscle preparations. The neuromuscular blockade is mediated by inhibitory action at the presynaptic motor nerve endings. PLA2 catalyzes the calcium-dependent hydrolysis of the 2-acyl groups in 3-sn-phosphoglycerides. In Bothrops marajoensis (Marajo lancehead), this protein is Basic phospholipase A2 Bmaj-9.